The primary structure comprises 241 residues: 1-(5-phosphoribosyl)-5-[(5-phosphoribosylamino)methylideneamino] imidazole-4-carboxamide isomerase (241 aa).

Asp-10 functions as the Proton acceptor in the catalytic mechanism. Asp-131 serves as the catalytic Proton donor.

This sequence belongs to the HisA/HisF family.

The protein localises to the cytoplasm. The catalysed reaction is 1-(5-phospho-beta-D-ribosyl)-5-[(5-phospho-beta-D-ribosylamino)methylideneamino]imidazole-4-carboxamide = 5-[(5-phospho-1-deoxy-D-ribulos-1-ylimino)methylamino]-1-(5-phospho-beta-D-ribosyl)imidazole-4-carboxamide. The protein operates within amino-acid biosynthesis; L-histidine biosynthesis; L-histidine from 5-phospho-alpha-D-ribose 1-diphosphate: step 4/9. The polypeptide is 1-(5-phosphoribosyl)-5-[(5-phosphoribosylamino)methylideneamino] imidazole-4-carboxamide isomerase (Bifidobacterium longum (strain DJO10A)).